Here is a 129-residue protein sequence, read N- to C-terminus: Large ribosomal subunit protein eL32 (129 aa).

The protein belongs to the eukaryotic ribosomal protein eL32 family.

The polypeptide is Large ribosomal subunit protein eL32 (rpl32e) (Methanosarcina mazei (strain ATCC BAA-159 / DSM 3647 / Goe1 / Go1 / JCM 11833 / OCM 88) (Methanosarcina frisia)).